A 197-amino-acid chain; its full sequence is Imidazoleglycerol-phosphate dehydratase (197 aa).

It belongs to the imidazoleglycerol-phosphate dehydratase family.

The protein localises to the cytoplasm. It catalyses the reaction D-erythro-1-(imidazol-4-yl)glycerol 3-phosphate = 3-(imidazol-4-yl)-2-oxopropyl phosphate + H2O. The protein operates within amino-acid biosynthesis; L-histidine biosynthesis; L-histidine from 5-phospho-alpha-D-ribose 1-diphosphate: step 6/9. The chain is Imidazoleglycerol-phosphate dehydratase from Bradyrhizobium sp. (strain BTAi1 / ATCC BAA-1182).